An 876-amino-acid chain; its full sequence is DNA double-strand break repair Rad50 ATPase (876 aa).

Residues R11, 31 to 37 (NGAGKTT), and Q139 contribute to the ATP site. Coiled-coil stretches lie at residues 188–528 (RERV…EDRL) and 575–710 (SGVE…RKER). The 98-residue stretch at 387-484 (EETLQSEYEE…RLESVRRELE (98 aa)) folds into the Zinc-hook domain. Residues C432 and C435 each contribute to the Zn(2+) site.

This sequence belongs to the SMC family. RAD50 subfamily. As to quaternary structure, homodimer. Forms a heterotetramer composed of two Mre11 subunits and two Rad50 subunits. The cofactor is Zn(2+).

Part of the Rad50/Mre11 complex, which is involved in the early steps of DNA double-strand break (DSB) repair. The complex may facilitate opening of the processed DNA ends to aid in the recruitment of HerA and NurA. Rad50 controls the balance between DNA end bridging and DNA resection via ATP-dependent structural rearrangements of the Rad50/Mre11 complex. In Methanopyrus kandleri (strain AV19 / DSM 6324 / JCM 9639 / NBRC 100938), this protein is DNA double-strand break repair Rad50 ATPase.